Reading from the N-terminus, the 115-residue chain is MAPRSLYLLAVLLFSANLFAGVGFAAAAEGPEDKGLTKGGKGKGEKGTKVGADDTNGTDPDPEPEPEPEPEPEPEPEPEPEPEPEPEPEPEPGAATLKSVALPFAIAAAALVAAF.

A signal peptide spans M1 to A27. Residues A27 to L97 are disordered. Over residues P31–A52 the composition is skewed to basic and acidic residues. A glycan (N-linked (GlcNAc...) asparagine) is linked at N56. 17 repeat units span residues D59–P60, D61–P62, E63–P64, E65–P66, E67–P68, E69–P70, E71–P72, E73–P74, E75–P76, E77–P78, E79–P80, E81–P82, E83–P84, E85–P86, E87–P88, E89–P90, and E91–P92. The 17 X 2 AA tandem repeats of [DE]-P stretch occupies residues D59–P92. Residues P60–P90 show a composition bias toward acidic residues. The GPI-anchor amidated glycine moiety is linked to residue G93. A propeptide spans A94 to F115 (removed in mature form).

Its subcellular location is the cell membrane. Its function is as follows. Major surface antigen of procyclic forms. The protein is Procyclic form-specific polypeptide (PROA) of Trypanosoma brucei brucei.